A 214-amino-acid chain; its full sequence is Putative nickel/cobalt efflux system MJ1092 (214 aa).

6 consecutive transmembrane segments (helical) span residues 2-22, 46-66, 79-99, 116-136, 149-169, and 188-208; these read VMIM…LHAL, ILLG…LGIL, VHDM…IWII, VITL…AVLL, IYVA…AVAF, and LPLI…AHPI.

It belongs to the NiCoT transporter (TC 2.A.52) family.

The protein resides in the cell membrane. Efflux system for nickel and cobalt. The polypeptide is Putative nickel/cobalt efflux system MJ1092 (Methanocaldococcus jannaschii (strain ATCC 43067 / DSM 2661 / JAL-1 / JCM 10045 / NBRC 100440) (Methanococcus jannaschii)).